Here is a 163-residue protein sequence, read N- to C-terminus: Putative 4-hydroxy-4-methyl-2-oxoglutarate aldolase (163 aa).

Residues G76 to L79 and R98 each bind substrate. D99 contributes to the a divalent metal cation binding site.

This sequence belongs to the class II aldolase/RraA-like family. Homotrimer. Requires a divalent metal cation as cofactor.

It catalyses the reaction 4-hydroxy-4-methyl-2-oxoglutarate = 2 pyruvate. The enzyme catalyses oxaloacetate + H(+) = pyruvate + CO2. Functionally, catalyzes the aldol cleavage of 4-hydroxy-4-methyl-2-oxoglutarate (HMG) into 2 molecules of pyruvate. Also contains a secondary oxaloacetate (OAA) decarboxylase activity due to the common pyruvate enolate transition state formed following C-C bond cleavage in the retro-aldol and decarboxylation reactions. The polypeptide is Putative 4-hydroxy-4-methyl-2-oxoglutarate aldolase (Pseudomonas putida (strain ATCC 47054 / DSM 6125 / CFBP 8728 / NCIMB 11950 / KT2440)).